A 176-amino-acid chain; its full sequence is Adipose-secreted signaling protein (176 aa).

Residues 1-30 (MATAGKGSKGKGTGVRFTPEGTQGHPQEGT) are disordered. Positions 20–30 (EGTQGHPQEGT) are enriched in polar residues.

Belongs to the ADISSP family.

In terms of biological role, may be involved in thermogenesis and glucose homeostasis. The sequence is that of Adipose-secreted signaling protein from Taeniopygia guttata (Zebra finch).